The chain runs to 331 residues: Leucine-rich repeat-containing protein 26 (331 aa).

The first 26 residues, 1–26 (MRGSFFSRLPPQLSLLLLLSLRRVWT), serve as a signal peptide directing secretion. Over 27 to 261 (QEDIGTAPSK…QCTQSLAARD (235 aa)) the chain is Extracellular. One can recognise an LRRNT domain in the interval 34-71 (PSKSPVAPECPEACSCSLGGKANCSALALPAVPADLSW). Disulfide bonds link Cys-43/Cys-49 and Cys-47/Cys-57. 5 LRR repeats span residues 72-93 (QVRS…AFAN), 96-117 (ALLY…AFWG), 120-141 (VLQW…TFAP), 144-165 (ALSF…ILGP), and 168-191 (LLRV…NNLP). The LRRCT domain occupies 201-255 (NPWTCNCALRPLCTWLRKHPRPASETETLLCVSPRLQTLSLLTAFPDAAFKQCTQ). Disulfide bonds link Cys-205–Cys-231 and Cys-207–Cys-253. A helical membrane pass occupies residues 262–282 (LAVVYALGPVSFLASLAICLA). Residues 283 to 331 (LGSVLTACGARRRRRRRTTVRHLLRRQLDPEGPPSLEDAGSPVTAAIQA) are Cytoplasmic-facing. Positions 310 to 331 (LDPEGPPSLEDAGSPVTAAIQA) are disordered.

In terms of assembly, interacts with KCNMA1.

It localises to the cell membrane. The protein localises to the cytoplasm. The protein resides in the cytoskeleton. In terms of biological role, auxiliary protein of the large-conductance, voltage and calcium-activated potassium channel (BK alpha). Required for the conversion of BK alpha channels from a high-voltage to a low-voltage activated channel type in non-excitable cells. These are characterized by negative membrane voltages and constant low levels of calcium. This chain is Leucine-rich repeat-containing protein 26 (Lrrc26), found in Mus musculus (Mouse).